A 1152-amino-acid chain; its full sequence is Nardilysin (1152 aa).

An N-terminal signal peptide occupies residues 1–20 (MLRKVTVAAVCATRRKLCEA). Disordered regions lie at residues 81-108 (LGAD…KSPS) and 133-208 (MEGK…KKTT). Phosphoserine is present on residues S86, S94, and S96. Positions 141–198 (TDDEEEEEVEEEEEDDDEDSGAEIEDDDEEGFDDEDEFDDEHDDDLDTEDNELEELEE) are enriched in acidic residues. H234 serves as a coordination point for Zn(2+). Catalysis depends on E237, which acts as the Proton acceptor. Zn(2+) contacts are provided by H238 and E315.

Belongs to the peptidase M16 family. In terms of assembly, interacts with BACE1 and NRG1. Zn(2+) serves as cofactor.

Its subcellular location is the mitochondrion. It is found in the cell projection. The protein resides in the dendrite. The catalysed reaction is Hydrolysis of polypeptides, preferably at -Xaa-|-Arg-Lys-, and less commonly at -Arg-|-Arg-Xaa-, in which Xaa is not Arg or Lys.. In terms of biological role, cleaves peptide substrates on the N-terminus of arginine residues in dibasic pairs. Is a critical activator of BACE1- and ADAM17-mediated pro-neuregulin ectodomain shedding, involved in the positive regulation of axonal maturation and myelination. Required for proper functioning of 2-oxoglutarate dehydrogenase (OGDH). This chain is Nardilysin, found in Pongo abelii (Sumatran orangutan).